A 156-amino-acid chain; its full sequence is Phosphopantetheine adenylyltransferase (156 aa).

Substrate is bound at residue T10. ATP contacts are provided by residues 10–11 (TF) and H18. Substrate contacts are provided by K42, L74, and R88. Residues 89–91 (GLR), E99, and 124–130 (NAFISSS) contribute to the ATP site.

This sequence belongs to the bacterial CoaD family. As to quaternary structure, homohexamer. The cofactor is Mg(2+).

Its subcellular location is the cytoplasm. It catalyses the reaction (R)-4'-phosphopantetheine + ATP + H(+) = 3'-dephospho-CoA + diphosphate. Its pathway is cofactor biosynthesis; coenzyme A biosynthesis; CoA from (R)-pantothenate: step 4/5. In terms of biological role, reversibly transfers an adenylyl group from ATP to 4'-phosphopantetheine, yielding dephospho-CoA (dPCoA) and pyrophosphate. The polypeptide is Phosphopantetheine adenylyltransferase (Campylobacter curvus (strain 525.92)).